We begin with the raw amino-acid sequence, 199 residues long: Peroxynitrite isomerase (199 aa).

The GXWXGXG signature appears at 20 to 26 (GVWEGTG). Residue His190 participates in heme b binding.

The protein belongs to the nitrobindin family. Homodimer. Heme b is required as a cofactor.

The enzyme catalyses peroxynitrite = nitrate. Its pathway is nitrogen metabolism. In terms of biological role, heme-binding protein able to scavenge peroxynitrite and to protect free L-tyrosine against peroxynitrite-mediated nitration, by acting as a peroxynitrite isomerase that converts peroxynitrite to nitrate. Therefore, this protein likely plays a role in peroxynitrite sensing and in the detoxification of reactive nitrogen and oxygen species (RNS and ROS, respectively). Is able to bind nitric oxide (NO) in vitro, but may act as a sensor of peroxynitrite levels in vivo. The chain is Peroxynitrite isomerase from Clavibacter michiganensis subsp. michiganensis (strain NCPPB 382).